The chain runs to 522 residues: 5,6-dihydroxyindole-2-carboxylic acid oxidase (522 aa).

Positions 1 to 21 (MLRTSCGGMLLLVHALGLVRA) are cleaved as a signal peptide. At 22 to 470 (QFPRACVTPE…RPLTPTQIVT (449 aa)) the chain is on the lumenal, melanosome side. 5 cysteine pairs are disulfide-bonded: Cys-27–Cys-38, Cys-39–Cys-59, Cys-50–Cys-89, Cys-91–Cys-100, and Cys-103–Cys-112. N-linked (GlcNAc...) asparagine glycans are attached at residues Asn-164 and Asn-171. 3 residues coordinate Zn(2+): His-182, His-205, and His-214. 2 cysteine pairs are disulfide-bonded: Cys-248-Cys-251 and Cys-280-Cys-293. N-linked (GlcNAc...) asparagine glycosylation occurs at Asn-294. Zn(2+) is bound by residues His-367 and His-371. Residue Asn-375 is glycosylated (N-linked (GlcNAc...) asparagine). Position 394 (His-394) interacts with Zn(2+). A helical transmembrane segment spans residues 471 to 491 (VAVVAALLLVAIIFAASTCVV). The Cytoplasmic portion of the chain corresponds to 492–522 (HLRGNRTEGRQPLLGDQYQRYEDHNKTQSVV).

It belongs to the tyrosinase family. Cu(2+) serves as cofactor. The cofactor is Zn(2+).

The protein localises to the melanosome membrane. The catalysed reaction is 2 5,6-dihydroxyindole-2-carboxylate + O2 = 2 indole-5,6-quinone-2-carboxylate + 2 H2O. The protein operates within pigment biosynthesis; melanin biosynthesis. Functionally, plays a role in melanin biosynthesis. Catalyzes the oxidation of 5,6-dihydroxyindole-2-carboxylic acid (DHICA) into indole-5,6-quinone-2-carboxylic acid. May regulate or influence the type of melanin synthesized. Also to a lower extent, capable of hydroxylating tyrosine and producing melanin. The polypeptide is 5,6-dihydroxyindole-2-carboxylic acid oxidase (tyrp1) (Carassius auratus (Goldfish)).